We begin with the raw amino-acid sequence, 954 residues long: Isoleucine--tRNA ligase (954 aa).

The short motif at 58 to 68 (PYANGDIHIGH) is the 'HIGH' region element. Glu-572 contacts L-isoleucyl-5'-AMP. The short motif at 613-617 (KMSKS) is the 'KMSKS' region element. Residue Lys-616 coordinates ATP. The Zn(2+) site is built by Cys-917, Cys-920, Cys-937, and Cys-940.

The protein belongs to the class-I aminoacyl-tRNA synthetase family. IleS type 1 subfamily. As to quaternary structure, monomer. It depends on Zn(2+) as a cofactor.

It is found in the cytoplasm. The catalysed reaction is tRNA(Ile) + L-isoleucine + ATP = L-isoleucyl-tRNA(Ile) + AMP + diphosphate. In terms of biological role, catalyzes the attachment of isoleucine to tRNA(Ile). As IleRS can inadvertently accommodate and process structurally similar amino acids such as valine, to avoid such errors it has two additional distinct tRNA(Ile)-dependent editing activities. One activity is designated as 'pretransfer' editing and involves the hydrolysis of activated Val-AMP. The other activity is designated 'posttransfer' editing and involves deacylation of mischarged Val-tRNA(Ile). This is Isoleucine--tRNA ligase from Photobacterium profundum (strain SS9).